A 57-amino-acid chain; its full sequence is Large ribosomal subunit protein bL32 (57 aa).

The interval Met1–His22 is disordered.

It belongs to the bacterial ribosomal protein bL32 family.

The polypeptide is Large ribosomal subunit protein bL32 (Nostoc punctiforme (strain ATCC 29133 / PCC 73102)).